Consider the following 349-residue polypeptide: Magnesium-protoporphyrin IX monomethyl ester [oxidative] cyclase (349 aa).

This sequence belongs to the AcsF family. The cofactor is Fe cation.

It localises to the plastid. Its subcellular location is the chloroplast. It catalyses the reaction Mg-protoporphyrin IX 13-monomethyl ester + 3 NADPH + 3 O2 + 2 H(+) = 3,8-divinyl protochlorophyllide a + 3 NADP(+) + 5 H2O. It functions in the pathway porphyrin-containing compound metabolism; chlorophyll biosynthesis (light-independent). Its function is as follows. Catalyzes the formation of the isocyclic ring in chlorophyll biosynthesis. Mediates the cyclase reaction, which results in the formation of divinylprotochlorophyllide (Pchlide) characteristic of all chlorophylls from magnesium-protoporphyrin IX 13-monomethyl ester (MgPMME). In Pyropia yezoensis (Susabi-nori), this protein is Magnesium-protoporphyrin IX monomethyl ester [oxidative] cyclase.